We begin with the raw amino-acid sequence, 287 residues long: mRNA-capping enzyme regulatory subunit OPG124 (287 aa).

It belongs to the orthopoxvirus mRNA-capping enzyme regulatory subunit family. As to quaternary structure, interacts with the catalytic subunit OPG113.

The protein localises to the virion. In terms of biological role, regulatory subunit of the mRNA cap enzyme which stabilizes the catalytic subunit and enhances its methyltransferase activity through an allosteric mechanism. Heterodimeric mRNA capping enzyme catalyzes the linkage of a N7-methyl-guanosine moiety to the first transcribed nucleotide (cap 0 structure), whereas the methyltransferase OPG102 is responsible for a second methylation at the 2'-O position of the ribose (cap 1 structure). Also involved in early viral gene transcription termination and intermediate viral gene transcription initiation. Early gene transcription termination requires the termination factor VTF, the DNA-dependent ATPase NPH-I/OPG123 and the RAP94/OPG109 subunit of the viral RNA polymerase, as well as the presence of a specific termination motif. Binds, together with RAP94/OPG109, to the termination motif 5'-UUUUUNU-3' in the nascent early mRNA. The sequence is that of mRNA-capping enzyme regulatory subunit OPG124 (OPG124) from Vaccinia virus (strain Copenhagen) (VACV).